We begin with the raw amino-acid sequence, 490 residues long: MVEVEKKIKEGLTFDDVLLVPQYSEVLPHEVDVSTYLTKRIKLNIPIVSAAMDTVTEARLAIALAREGGIGIIHRNLPIKKQAEEVEKVKKSESGMIINPVTVKPDTRVKEALDIMAKYKISGVPVVDEERKLIGILTNRDLRFIKPEDYSKPVSEFMTKENLITAPEGITLDEAEEIFRKYKIEKLPIVDKEGKIKGLITIKDIVKRKKYPNACKDELGRLRVGAAVGTGEETLDRVAALVEAGVDVIVVDTAHGHSKRVLETVEKIKANFPEVDVIAGNVATAEGTKALIEAGADAVKVGVGPGSICTTRIVAGVGVPQLTAIMEAASAAREYDIPIIADGGIRYSGDIVKALAAGASAVMLGNLLAGTEEAPGETIYYQGRAYKVYRGMGSLGAMSSRLSSDRYGQEKMEKFVPEGIEGRVPYKGKLADVVYQLVGGLRSGMGYVGARNIKELQEKAKFVRITWAGYRESHVHDVQITREAPNYWVD.

CBS domains lie at 96 to 154 (MIIN…SKPV) and 158 to 218 (MTKE…CKDE). NAD(+)-binding positions include aspartate 252 and 302-304 (GVG). K(+) is bound by residues glycine 304 and glycine 306. Serine 307 is an IMP binding site. Residue cysteine 309 coordinates K(+). The active-site Thioimidate intermediate is cysteine 309. IMP-binding positions include 342-344 (DGG), 365-366 (GN), and 389-393 (YRGMG). Arginine 406 functions as the Proton acceptor in the catalytic mechanism. Residue glutamate 418 participates in IMP binding. 3 residues coordinate K(+): glutamate 472, serine 473, and histidine 474.

It belongs to the IMPDH/GMPR family. Homotetramer. Requires K(+) as cofactor.

It catalyses the reaction IMP + NAD(+) + H2O = XMP + NADH + H(+). Its pathway is purine metabolism; XMP biosynthesis via de novo pathway; XMP from IMP: step 1/1. Its activity is regulated as follows. Mycophenolic acid (MPA) is a non-competitive inhibitor that prevents formation of the closed enzyme conformation by binding to the same site as the amobile flap. In contrast, mizoribine monophosphate (MZP) is a competitive inhibitor that induces the closed conformation. MPA is a potent inhibitor of mammalian IMPDHs but a poor inhibitor of the bacterial enzymes. MZP is a more potent inhibitor of bacterial IMPDH. Functionally, catalyzes the conversion of inosine 5'-phosphate (IMP) to xanthosine 5'-phosphate (XMP), the first committed and rate-limiting step in the de novo synthesis of guanine nucleotides, and therefore plays an important role in the regulation of cell growth. The polypeptide is Inosine-5'-monophosphate dehydrogenase (Aquifex aeolicus (strain VF5)).